The sequence spans 206 residues: Adenine phosphoribosyltransferase (206 aa).

It belongs to the purine/pyrimidine phosphoribosyltransferase family. In terms of assembly, homodimer.

Its subcellular location is the cytoplasm. It carries out the reaction AMP + diphosphate = 5-phospho-alpha-D-ribose 1-diphosphate + adenine. The protein operates within purine metabolism; AMP biosynthesis via salvage pathway; AMP from adenine: step 1/1. In terms of biological role, catalyzes a salvage reaction resulting in the formation of AMP, that is energically less costly than de novo synthesis. This is Adenine phosphoribosyltransferase from Burkholderia mallei (strain NCTC 10229).